We begin with the raw amino-acid sequence, 744 residues long: Cytosolic neutral trehalase (744 aa).

Asp-99, Asp-101, Asn-103, Gln-105, and Asp-110 together coordinate Ca(2+). Substrate is bound by residues Arg-286, 293–294, Asn-330, 339–341, Glu-406, Arg-455, and Gly-458; these read WD and RSQ. Catalysis depends on proton donor/acceptor residues Asp-460 and Glu-665.

The protein belongs to the glycosyl hydrolase 37 family. Ca(2+) serves as cofactor.

Its subcellular location is the cytoplasm. The enzyme catalyses alpha,alpha-trehalose + H2O = alpha-D-glucose + beta-D-glucose. It participates in carbohydrate degradation. Its function is as follows. Hydrolyzes intracellular trehalose to glucose. The protein is Cytosolic neutral trehalase of Neurospora crassa (strain ATCC 24698 / 74-OR23-1A / CBS 708.71 / DSM 1257 / FGSC 987).